The primary structure comprises 206 residues: Small ribosomal subunit protein uS2 (206 aa).

Belongs to the universal ribosomal protein uS2 family.

This is Small ribosomal subunit protein uS2 from Methanothrix thermoacetophila (strain DSM 6194 / JCM 14653 / NBRC 101360 / PT) (Methanosaeta thermophila).